A 683-amino-acid polypeptide reads, in one-letter code: Solute carrier family 28 member 3 (683 aa).

A disordered region spans residues 1–71 (MSAFKARGVE…EEEEEGEEDQ (71 aa)). The Cytoplasmic segment spans residues 1–97 (MSAFKARGVE…FYKRNKKIIH (97 aa)). Positions 60-71 (DNEEEEEGEEDQ) are enriched in acidic residues. A helical membrane pass occupies residues 98–118 (YTFLGLLLVGYFALVIAACIV). Residues 119 to 123 (NFKQS) are Extracellular-facing. The chain crosses the membrane as a helical span at residues 124–144 (LALLVLTLIAIFFFFWDLFIA). Over 145-168 (KYGDKIAEALKPCQKFLDNHWSII) the chain is Cytoplasmic. Residues 169-189 (RWFVYGALLLAVILWLTLDTA) traverse the membrane as a helical segment. The Extracellular portion of the chain corresponds to 190–192 (KRG). Residues 193 to 214 (ANQVIPFFGLILYILLVFIFSK) traverse the membrane as a helical segment. The Cytoplasmic segment spans residues 215 to 222 (HPTKVRWR). The chain crosses the membrane as a helical span at residues 223 to 242 (IVIWGLLLQFIFGLIILRTK). At 243 to 279 (PGLDAFNWLGIQVQTFLKYTDAGSRFLFGDDFQDHFF) the chain is on the extracellular side. Residues 280–300 (AFAVLPIVIFFSTVMSMMYYL) traverse the membrane as a helical segment. At 301-324 (GLMQWLILKVGWLMQITMGTSPME) the chain is on the cytoplasmic side. Positions 325 to 343 (SMVSAGNIFVGQTESPLLI) form an intramembrane region, helical. At 344–356 (RPYLADLTISEMH) the chain is on the cytoplasmic side. The helical transmembrane segment at 357 to 379 (SVMSSGFATIAGSVLGAYISLGI) threads the bilayer. Residues 380 to 381 (PA) lie on the Extracellular side of the membrane. A helical transmembrane segment spans residues 382-403 (AHLLTASVMSAPAALAISKTFW). Residues 404-438 (PETKKSKNSTQTSIKLEKGQENNLVEAASQGASAA) lie on the Cytoplasmic side of the membrane. The helical transmembrane segment at 439–464 (VPLVANIAANLIAFLAVLAFINATLS) threads the bilayer. Residues 465–502 (WLGSMFNYPQFSFEIICSYVLMPFAFMMGVNYDDSFLV) lie on the Extracellular side of the membrane. The segment at residues 503 to 522 (AELLGMKTFFNEFVAYQRLS) is an intramembrane region (helical). The Extracellular segment spans residues 523–561 (EYIHNRESGGPLFVDGVRQYMSVRSEAIATYALCGFANF). The helical transmembrane segment at 562–572 (GSLGIMIGGLS) threads the bilayer. The Cytoplasmic segment spans residues 573-585 (SLAPHRKSDIASC). Residues 586–608 (GIRALIAGTIACFSTACIAGVLY) form a helical membrane-spanning segment. Topologically, residues 609-683 (IPELYCPNLL…GFNCSEVRPE (75 aa)) are extracellular.

The protein belongs to the concentrative nucleoside transporter (CNT) (TC 2.A.41) family. Homotrimer.

Its subcellular location is the cell membrane. It catalyses the reaction thymidine(out) + 2 Na(+)(out) = thymidine(in) + 2 Na(+)(in). The catalysed reaction is cytidine(out) + 2 Na(+)(out) = cytidine(in) + 2 Na(+)(in). It carries out the reaction uridine(out) + 2 Na(+)(out) = uridine(in) + 2 Na(+)(in). The enzyme catalyses adenosine(out) + 2 Na(+)(out) = adenosine(in) + 2 Na(+)(in). It catalyses the reaction guanosine(out) + 2 Na(+)(out) = guanosine(in) + 2 Na(+)(in). The catalysed reaction is inosine(out) + 2 Na(+)(out) = inosine(in) + 2 Na(+)(in). Sodium-dependent, pyrimidine- and purine-selective. Involved in the homeostasis of endogenous nucleosides. Exhibits the transport characteristics of the nucleoside transport system cib or N3 subtype (N3/cib) (with marked transport of both thymidine and inosine). Employs a 2:1 sodium/nucleoside ratio. Also able to transport gemcitabine, 3'-azido-3'-deoxythymidine (AZT), ribavirin and 3-deazauridine. The protein is Solute carrier family 28 member 3 (SLC28A3) of Eptatretus stoutii (Pacific hagfish).